The primary structure comprises 685 residues: Transforming growth factor beta activator LRRC33 (685 aa).

Positions 1–27 (MPVCGCLSVVLSHAVVLLMLVLHSASG) are cleaved as a signal peptide. Over 28 to 640 (HPQTFPCRLI…CGFTNNNKES (613 aa)) the chain is Extracellular. In terms of domain architecture, LRRNT spans 29-56 (PQTFPCRLIQRVALCSGRQLSVIPDCLP). 7 LRR repeats span residues 57–79 (HETEEIFFDRNLLENLQDGLSRY), 80–102 (PFLRMFSCANNQLMTVAETAFIE), 103–129 (SHLLENLNLANNELHHGHKQVAQAFRS), 130–154 (LTQLKTLDLSGNGLSEDMVSVLVAN), 155–178 (LSSLESLYLSRNGMQRLDESTFRD), 180–201 (HQLKELNVERNLLFEISGAFDH), and 202–225 (MKKLQRLNLAFNCLPCLVNFEMTQ). Asn154 carries an N-linked (GlcNAc...) asparagine glycan. Residues Asn230 and Asn244 are each glycosylated (N-linked (GlcNAc...) asparagine). LRR repeat units follow at residues 248 to 271 (TFQLETLDLSDNHLLFFPFLPTNN) and 273 to 296 (IRTLLLSNNRVGFYQHLANSTSSN). N-linked (GlcNAc...) asparagine glycosylation is found at Asn291, Asn296, Asn309, Asn312, and Asn325. LRR repeat units follow at residues 326–349 (LSSVEFLDLSENKVNYFPQGFIKQ), 351–373 (PQLYWLKLRSNCLQSFSLTSEDL), 374–397 (PVTIYELDVSRNRLTEIKASQTSK), 400–423 (LNNLTHLNLSTNDLQNFPPMIFTS), 425–447 (PNLNTLDLSHNTVDVCYSSNYMG), 457–480 (MASLKQLYLADCSIQNVPSSAFKG), 482–503 (SLTHLELSNNPNLHLKQQSLKG), 505–526 (ANTLQHLGIGNTGLQDFDFSPY), 527–549 (TNLKSLNISRNSLSKLPDSLMAL), 551–571 (LKLLDLRDNSLTTIKSEHASL), and 573–596 (AKKLQTVYMNGNAFNCCHLDWFRT). Residues Asn402 and Asn407 are each glycosylated (N-linked (GlcNAc...) asparagine). N-linked (GlcNAc...) asparagine glycosylation occurs at Asn533. The LRRCT domain maps to 597 to 635 (FGENKGIHVADLSEITCLDLNYRRHKVVLTDAVYCGFTN). Residues 641-661 (VVWYILLFVTVSVSIMGISVI) traverse the membrane as a helical segment. The Cytoplasmic segment spans residues 662-685 (YMLTFKPRMLPRVIKKKCWRPTSY).

Belongs to the LRRC32/LRRC33 family.

It localises to the cell membrane. The protein resides in the endoplasmic reticulum membrane. Key regulator of transforming growth factor beta-1 (TGFB1) specifically required for microglia function in the nervous system. Required for activation of latent TGF-beta-1 in macrophages and microglia: associates specifically via disulfide bonds with the Latency-associated peptide (LAP), which is the regulatory chain of TGFB1, and regulates integrin-dependent activation of TGF-beta-1. TGF-beta-1 activation mediated by lrrc33/nrros is highly localized: there is little spreading of TGF-beta-1 activated from one microglial cell to neighboring microglia, suggesting the existence of localized and selective activation of TGF-beta-1 by lrrc33/nrros. The chain is Transforming growth factor beta activator LRRC33 from Danio rerio (Zebrafish).